The primary structure comprises 177 residues: Photosystem I assembly protein Ycf4 (177 aa).

Transmembrane regions (helical) follow at residues 20 to 40 (VALL…SSYF) and 60 to 80 (LVMG…WAVI).

The protein belongs to the Ycf4 family.

The protein localises to the cellular thylakoid membrane. In terms of biological role, seems to be required for the assembly of the photosystem I complex. The protein is Photosystem I assembly protein Ycf4 of Synechococcus sp. (strain RCC307).